Reading from the N-terminus, the 55-residue chain is Large ribosomal subunit protein bL33 (55 aa).

It belongs to the bacterial ribosomal protein bL33 family.

This chain is Large ribosomal subunit protein bL33, found in Rhizobium johnstonii (strain DSM 114642 / LMG 32736 / 3841) (Rhizobium leguminosarum bv. viciae).